Consider the following 485-residue polypeptide: MTHWIAGEWVQGQGEAFTSLSPYNQEVIWQGNGATAEQVNQAVSAAREAFVDWKKRPFAEREAIVLAFAEKVKENSEKIAEVIAKETGKPIWETRTEAAAMAGKIAISIRAYHDRTGEATREAAGNQIVLRHRPLGVMAVFGPYNFPGHLPNGHIVPALLAGNTVVFKPSEQTPWTGELAMKLWEEVGLPKGVINLVQGAKETGIALADAKGIDGVLFTGSANTGHVLHRQFAGQPGKMLALEMGGNNPMVISDNYGDLDATVYTIIQSAFISAGQRCTCARRLYIPFGDKGDAVITKLVEATRNIRVDRPFAEPAPFMGPQISVAAAKFILDAQANLQSLGGESLIEAKAGEAAFVSPGIIDVTNIAELPDEEYFGPLLQVVRYEGLEKAVELANDTRFGLSAGLVSTDDQEWEYFVDHIRAGIVNRNRQLTGASGDAPFGGPGASGNLRPSAYYAADYCAYPMASMEGQETVLPATLSPGVSL.

Residue 220–225 (GSANTG) coordinates NAD(+). Catalysis depends on residues Glu243 and Cys278.

It belongs to the aldehyde dehydrogenase family. AstD subfamily.

It carries out the reaction N-succinyl-L-glutamate 5-semialdehyde + NAD(+) + H2O = N-succinyl-L-glutamate + NADH + 2 H(+). It participates in amino-acid degradation; L-arginine degradation via AST pathway; L-glutamate and succinate from L-arginine: step 4/5. Catalyzes the NAD-dependent reduction of succinylglutamate semialdehyde into succinylglutamate. The sequence is that of N-succinylglutamate 5-semialdehyde dehydrogenase from Vibrio campbellii (strain ATCC BAA-1116).